Here is a 296-residue protein sequence, read N- to C-terminus: Bifunctional protein FolD (296 aa).

NADP(+)-binding positions include Gly168 to Ser170, Thr197, and Val238.

Belongs to the tetrahydrofolate dehydrogenase/cyclohydrolase family. In terms of assembly, homodimer.

It catalyses the reaction (6R)-5,10-methylene-5,6,7,8-tetrahydrofolate + NADP(+) = (6R)-5,10-methenyltetrahydrofolate + NADPH. It carries out the reaction (6R)-5,10-methenyltetrahydrofolate + H2O = (6R)-10-formyltetrahydrofolate + H(+). The protein operates within one-carbon metabolism; tetrahydrofolate interconversion. Functionally, catalyzes the oxidation of 5,10-methylenetetrahydrofolate to 5,10-methenyltetrahydrofolate and then the hydrolysis of 5,10-methenyltetrahydrofolate to 10-formyltetrahydrofolate. In Desulfotalea psychrophila (strain LSv54 / DSM 12343), this protein is Bifunctional protein FolD.